The chain runs to 130 residues: Small ribosomal subunit protein uS9 (130 aa).

Belongs to the universal ribosomal protein uS9 family.

This chain is Small ribosomal subunit protein uS9, found in Polaromonas sp. (strain JS666 / ATCC BAA-500).